Here is a 144-residue protein sequence, read N- to C-terminus: Nucleoside diphosphate kinase (144 aa).

The ATP site is built by Lys11, Phe59, Arg87, Thr93, Arg104, and Asn114. Catalysis depends on His117, which acts as the Pros-phosphohistidine intermediate.

It belongs to the NDK family. As to quaternary structure, homotetramer. The cofactor is Mg(2+).

It localises to the cytoplasm. It catalyses the reaction a 2'-deoxyribonucleoside 5'-diphosphate + ATP = a 2'-deoxyribonucleoside 5'-triphosphate + ADP. The catalysed reaction is a ribonucleoside 5'-diphosphate + ATP = a ribonucleoside 5'-triphosphate + ADP. In terms of biological role, major role in the synthesis of nucleoside triphosphates other than ATP. The ATP gamma phosphate is transferred to the NDP beta phosphate via a ping-pong mechanism, using a phosphorylated active-site intermediate. This chain is Nucleoside diphosphate kinase, found in Psychromonas ingrahamii (strain DSM 17664 / CCUG 51855 / 37).